Reading from the N-terminus, the 277-residue chain is Bis(5'-nucleosyl)-tetraphosphatase, symmetrical (277 aa).

It belongs to the Ap4A hydrolase family.

It carries out the reaction P(1),P(4)-bis(5'-adenosyl) tetraphosphate + H2O = 2 ADP + 2 H(+). Its function is as follows. Hydrolyzes diadenosine 5',5'''-P1,P4-tetraphosphate to yield ADP. This is Bis(5'-nucleosyl)-tetraphosphatase, symmetrical from Azotobacter vinelandii (strain DJ / ATCC BAA-1303).